The following is a 78-amino-acid chain: Acyl carrier protein 1 (78 aa).

The Carrier domain maps to 2–77 (STIEERVKKI…EAIDYIVAHQ (76 aa)). S37 carries the post-translational modification O-(pantetheine 4'-phosphoryl)serine.

It belongs to the acyl carrier protein (ACP) family. Post-translationally, 4'-phosphopantetheine is transferred from CoA to a specific serine of apo-ACP by AcpS. This modification is essential for activity because fatty acids are bound in thioester linkage to the sulfhydryl of the prosthetic group.

The protein localises to the cytoplasm. It functions in the pathway lipid metabolism; fatty acid biosynthesis. Its function is as follows. Carrier of the growing fatty acid chain in fatty acid biosynthesis. This is Acyl carrier protein 1 from Pseudomonas aeruginosa (strain ATCC 15692 / DSM 22644 / CIP 104116 / JCM 14847 / LMG 12228 / 1C / PRS 101 / PAO1).